A 102-amino-acid polypeptide reads, in one-letter code: Aspartyl/glutamyl-tRNA(Asn/Gln) amidotransferase subunit C (102 aa).

It belongs to the GatC family. In terms of assembly, heterotrimer of A, B and C subunits.

The enzyme catalyses L-glutamyl-tRNA(Gln) + L-glutamine + ATP + H2O = L-glutaminyl-tRNA(Gln) + L-glutamate + ADP + phosphate + H(+). It carries out the reaction L-aspartyl-tRNA(Asn) + L-glutamine + ATP + H2O = L-asparaginyl-tRNA(Asn) + L-glutamate + ADP + phosphate + 2 H(+). Functionally, allows the formation of correctly charged Asn-tRNA(Asn) or Gln-tRNA(Gln) through the transamidation of misacylated Asp-tRNA(Asn) or Glu-tRNA(Gln) in organisms which lack either or both of asparaginyl-tRNA or glutaminyl-tRNA synthetases. The reaction takes place in the presence of glutamine and ATP through an activated phospho-Asp-tRNA(Asn) or phospho-Glu-tRNA(Gln). The chain is Aspartyl/glutamyl-tRNA(Asn/Gln) amidotransferase subunit C from Bordetella parapertussis (strain 12822 / ATCC BAA-587 / NCTC 13253).